Consider the following 269-residue polypeptide: Formamidopyrimidine-DNA glycosylase (269 aa).

The Schiff-base intermediate with DNA role is filled by P2. The active-site Proton donor is the E3. K57 serves as the catalytic Proton donor; for beta-elimination activity. Residues H90, R109, and K150 each coordinate DNA. The FPG-type zinc finger occupies 235–269; sequence QVYGRKGEPCRVCGTPIAATKHAQRATFYCRHCQK. R259 serves as the catalytic Proton donor; for delta-elimination activity.

The protein belongs to the FPG family. Monomer. Zn(2+) serves as cofactor.

The catalysed reaction is Hydrolysis of DNA containing ring-opened 7-methylguanine residues, releasing 2,6-diamino-4-hydroxy-5-(N-methyl)formamidopyrimidine.. It catalyses the reaction 2'-deoxyribonucleotide-(2'-deoxyribose 5'-phosphate)-2'-deoxyribonucleotide-DNA = a 3'-end 2'-deoxyribonucleotide-(2,3-dehydro-2,3-deoxyribose 5'-phosphate)-DNA + a 5'-end 5'-phospho-2'-deoxyribonucleoside-DNA + H(+). Involved in base excision repair of DNA damaged by oxidation or by mutagenic agents. Acts as a DNA glycosylase that recognizes and removes damaged bases. Has a preference for oxidized purines, such as 7,8-dihydro-8-oxoguanine (8-oxoG). Has AP (apurinic/apyrimidinic) lyase activity and introduces nicks in the DNA strand. Cleaves the DNA backbone by beta-delta elimination to generate a single-strand break at the site of the removed base with both 3'- and 5'-phosphates. The chain is Formamidopyrimidine-DNA glycosylase from Salmonella paratyphi B (strain ATCC BAA-1250 / SPB7).